The chain runs to 880 residues: Probable LRR receptor-like serine/threonine-protein kinase At2g28960 (880 aa).

The N-terminal stretch at 1-24 is a signal peptide; that stretch reads MEGRRQRLLVFIFGALAITHLVQA. Residues 25–511 are Extracellular-facing; it reads QPPDQRGFIS…NNNNQTYIVP (487 aa). N-linked (GlcNAc...) asparagine glycans are attached at residues Asn180, Asn201, Asn228, Asn254, Asn287, Asn403, Asn430, and Asn441. 3 LRR repeats span residues 409–430, 433–455, and 457–476; these read RIIS…AFQN, ELRK…LASM, and SLSI…PKLL. A glycan (N-linked (GlcNAc...) asparagine) is linked at Asn505. Residues 512–532 form a helical membrane-spanning segment; that stretch reads VVASVASVLIIIAVLILILVF. At 533–880 the chain is on the cytoplasmic side; sequence KKRRPTQVDS…FTTEINPKAR (348 aa). A Phosphothreonine modification is found at Thr564. The 274-residue stretch at 573-846 folds into the Protein kinase domain; sequence DNFERVLGEG…QVTNELKQCL (274 aa). ATP is bound by residues 579 to 587 and Lys601; that span reads LGEGGFGVV. The residue at position 646 (Tyr646) is a Phosphotyrosine. The Proton acceptor role is filled by Asp698. Phosphoserine is present on Ser732. A phosphothreonine mark is found at Thr733 and Thr738. Tyr746 is modified (phosphotyrosine). A disordered region spans residues 854–880; sequence GVREDMGSRSSVEMSTSFTTEINPKAR. A compositionally biased stretch (polar residues) spans 861–880; it reads SRSSVEMSTSFTTEINPKAR.

It belongs to the protein kinase superfamily. Ser/Thr protein kinase family.

It is found in the membrane. It carries out the reaction L-seryl-[protein] + ATP = O-phospho-L-seryl-[protein] + ADP + H(+). The catalysed reaction is L-threonyl-[protein] + ATP = O-phospho-L-threonyl-[protein] + ADP + H(+). In Arabidopsis thaliana (Mouse-ear cress), this protein is Probable LRR receptor-like serine/threonine-protein kinase At2g28960.